Reading from the N-terminus, the 120-residue chain is UPF0102 protein NT01CX_2205 (120 aa).

The protein belongs to the UPF0102 family.

The protein is UPF0102 protein NT01CX_2205 of Clostridium novyi (strain NT).